The chain runs to 193 residues: Epididymal-specific lipocalin-12 (193 aa).

An N-terminal signal peptide occupies residues 1–19 (MGPWWALWLILTLPQILGG). Cys-88 and Cys-193 are joined by a disulfide. 2 N-linked (GlcNAc...) asparagine glycosylation sites follow: Asn-143 and Asn-172.

This sequence belongs to the calycin superfamily. Lipocalin family. As to quaternary structure, monomer.

It is found in the secreted. Its function is as follows. Binds all-trans retinoic acid and may act as a retinoid carrier protein within the epididymis. May play a role in male fertility. The protein is Epididymal-specific lipocalin-12 (Lcn12) of Rattus norvegicus (Rat).